The following is a 158-amino-acid chain: S-ribosylhomocysteine lyase (158 aa).

Fe cation contacts are provided by His54, His58, and Cys124.

The protein belongs to the LuxS family. Homodimer. Requires Fe cation as cofactor.

The catalysed reaction is S-(5-deoxy-D-ribos-5-yl)-L-homocysteine = (S)-4,5-dihydroxypentane-2,3-dione + L-homocysteine. Its function is as follows. Involved in the synthesis of autoinducer 2 (AI-2) which is secreted by bacteria and is used to communicate both the cell density and the metabolic potential of the environment. The regulation of gene expression in response to changes in cell density is called quorum sensing. Catalyzes the transformation of S-ribosylhomocysteine (RHC) to homocysteine (HC) and 4,5-dihydroxy-2,3-pentadione (DPD). The polypeptide is S-ribosylhomocysteine lyase (Limosilactobacillus reuteri (Lactobacillus reuteri)).